A 76-amino-acid polypeptide reads, in one-letter code: RNA-binding protein KhpA (76 aa).

One can recognise a KH domain in the interval 30-76 (GEVLEVRVNPEDLGRVIGRSGRTAKALRTLVTALADGRRVRVDVVDD).

It belongs to the KhpA RNA-binding protein family.

It is found in the cytoplasm. Functionally, a probable RNA-binding protein. The chain is RNA-binding protein KhpA from Leifsonia xyli subsp. xyli (strain CTCB07).